A 166-amino-acid polypeptide reads, in one-letter code: Small ribosomal subunit protein uS5 (166 aa).

Residues 11–74 (LQEKLIAVNR…EKARRNMINV (64 aa)) enclose the S5 DRBM domain.

Belongs to the universal ribosomal protein uS5 family. In terms of assembly, part of the 30S ribosomal subunit. Contacts proteins S4 and S8.

In terms of biological role, with S4 and S12 plays an important role in translational accuracy. Its function is as follows. Located at the back of the 30S subunit body where it stabilizes the conformation of the head with respect to the body. This is Small ribosomal subunit protein uS5 from Cronobacter sakazakii (strain ATCC BAA-894) (Enterobacter sakazakii).